We begin with the raw amino-acid sequence, 350 residues long: MIRGFEAPMAENPPPPPPPVIFCHDSPKRVLVSVIRTTPIKPTCGGGGEPEPPPPLIPTSPGFSDFMVYPWRWGENAHNVTLSPGAAGAAASAALPAAAAAEHSGLRGRGAPPPAASASAAASGGEDEEEASSPDSGHLKDGIRRGRPRADTVRDLINEGEHSSSRIRCNICNRVFPREKSLQAHKRTHTGERPYLCDYPDCGKAFVQSGQLKTHQRLHTGEKPFVCSENGCLSRFTHANRHCPKHPYARLKREEPTDTLSKHQAADNKAAAEWLARYWEMREQRTPTLKGKLVQKADQEQQDPLEYLQSDEEDDEKRGAQRRLQEQRERLHGALALIELANLTGAPLRQ.

The tract at residues 104–151 is disordered; sequence SGLRGRGAPPPAASASAAASGGEDEEEASSPDSGHLKDGIRRGRPRAD. Basic and acidic residues predominate over residues 137-151; the sequence is GHLKDGIRRGRPRAD. 2 C2H2-type zinc fingers span residues 167–189 and 195–219; these read IRCNICNRVFPREKSLQAHKRTH and YLCDYPDCGKAFVQSGQLKTHQRLH. The segment at 290–327 is disordered; that stretch reads KGKLVQKADQEQQDPLEYLQSDEEDDEKRGAQRRLQEQ. A coiled-coil region spans residues 308-342; the sequence is LQSDEEDDEKRGAQRRLQEQRERLHGALALIELAN. Phosphoserine is present on Ser310. Positions 316-327 are enriched in basic and acidic residues; it reads EKRGAQRRLQEQ.

Belongs to the krueppel C2H2-type zinc-finger protein family.

The protein resides in the nucleus. Its function is as follows. Transcriptional activator. Isoform 1 may be involved in transcriptional activation of erythroid genes. In Homo sapiens (Human), this protein is Zinc finger protein 367 (ZNF367).